Here is a 476-residue protein sequence, read N- to C-terminus: Protein THYLAKOID RHODANESE-LIKE, chloroplastic (476 aa).

The N-terminal 21 residues, 1 to 21, are a transit peptide targeting the chloroplast; the sequence is MAATTTILSSAAPTPLTAPPR. A disordered region spans residues 1–29; the sequence is MAATTTILSSAAPTPLTAPPRARARAPAA. The segment covering 11–21 has biased composition (low complexity); that stretch reads AAPTPLTAPPR. The transit peptide at 22–58 directs the protein to the thylakoid; sequence ARARAPAARRRRLRARDILGAALGLANGGASAALAAP. The helical transmembrane segment at 100–120 threads the bilayer; it reads LVAAAGVAAVALPLVLAQVLG. Residues 140–246 enclose the Rhodanese domain; the sequence is EEPGAQLVDI…WLSSSLPWTA (107 aa). The next 2 membrane-spanning stretches (helical) occupy residues 264-284 and 287-307; these read LPVTLGLAAATGLGILAYTEI and VLQFLGSAAIVQLVASKLIYA. The disordered stretch occupies residues 342–476; sequence LPSTGTKSQP…PPSSPSPSAP (135 aa). Residues 351-389 show a composition bias toward low complexity; it reads PAITEAAPATAEAAPAAATATAAPPAAPVEETSTEAAPA. Pro residues predominate over residues 403–412; that stretch reads LKPPSSPSPL. Low complexity predominate over residues 425–446; it reads ESAATESAPAVNSAPVAEAAPE. Residues 447-476 are compositionally biased toward pro residues; that stretch reads AAPPAAPRPLSPYPNYPDLKPPSSPSPSAP.

As to quaternary structure, component of high molecular weight thylakoid LFNRs-containing protein complexes containing LIR1, LFNR1, LFNR2, TIC62 and TROL proteins.

The protein localises to the plastid. It localises to the chloroplast thylakoid membrane. In terms of biological role, rhodanese domain-containing protein required for anchoring ferredoxin--NADP reductase to the thylakoid membranes and sustaining efficient linear electron flow (LEF). The polypeptide is Protein THYLAKOID RHODANESE-LIKE, chloroplastic (Oryza sativa subsp. indica (Rice)).